A 148-amino-acid polypeptide reads, in one-letter code: Nucleoside diphosphate kinase (148 aa).

6 residues coordinate ATP: Lys10, Phe58, Arg86, Thr92, Arg103, and Asn113. His116 (pros-phosphohistidine intermediate) is an active-site residue.

The protein belongs to the NDK family. Requires Mg(2+) as cofactor.

It localises to the cytoplasm. It catalyses the reaction a 2'-deoxyribonucleoside 5'-diphosphate + ATP = a 2'-deoxyribonucleoside 5'-triphosphate + ADP. The enzyme catalyses a ribonucleoside 5'-diphosphate + ATP = a ribonucleoside 5'-triphosphate + ADP. Its function is as follows. Major role in the synthesis of nucleoside triphosphates other than ATP. The ATP gamma phosphate is transferred to the NDP beta phosphate via a ping-pong mechanism, using a phosphorylated active-site intermediate. This chain is Nucleoside diphosphate kinase, found in Thermoplasma acidophilum (strain ATCC 25905 / DSM 1728 / JCM 9062 / NBRC 15155 / AMRC-C165).